Here is a 230-residue protein sequence, read N- to C-terminus: Sugar fermentation stimulation protein homolog (230 aa).

The protein belongs to the SfsA family.

This Clostridium perfringens (strain 13 / Type A) protein is Sugar fermentation stimulation protein homolog.